The chain runs to 51 residues: Ovomucoid (51 aa).

The 49-residue stretch at 3 to 51 (VDCSGYPKPACTLEYFPLCGSDNQTYANKCTFCNAVVEKNVTLNHLGEC) folds into the Kazal-like domain. Disulfide bonds link Cys-5–Cys-35, Cys-13–Cys-32, and Cys-21–Cys-51. An N-linked (GlcNAc...) asparagine glycan is attached at Asn-42.

It is found in the secreted. This chain is Ovomucoid, found in Nothoprocta perdicaria (Chilean tinamou).